The following is a 363-amino-acid chain: Serpentine receptor class T-55 (363 aa).

Positions 1–18 (MKLRHFLIFLMLIPISSS) are cleaved as a signal peptide. 7 helical membrane-spanning segments follow: residues 70–90 (IYYI…IWVF), 107–127 (VFIG…PGFV), 143–163 (IVGK…AFLG), 187–207 (WLTV…TVLF), 231–251 (FLYF…ACLC), 278–298 (ICIS…FVLP), and 303–323 (FFHV…IMYI).

This sequence belongs to the nematode receptor-like protein srt family.

The protein localises to the membrane. The chain is Serpentine receptor class T-55 (srt-55) from Caenorhabditis elegans.